The following is a 124-amino-acid chain: Holo-[acyl-carrier-protein] synthase (124 aa).

The Mg(2+) site is built by Asp7 and Glu55.

Belongs to the P-Pant transferase superfamily. AcpS family. It depends on Mg(2+) as a cofactor.

The protein localises to the cytoplasm. The catalysed reaction is apo-[ACP] + CoA = holo-[ACP] + adenosine 3',5'-bisphosphate + H(+). Transfers the 4'-phosphopantetheine moiety from coenzyme A to a Ser of acyl-carrier-protein. This Borreliella afzelii (strain PKo) (Borrelia afzelii) protein is Holo-[acyl-carrier-protein] synthase.